Consider the following 792-residue polypeptide: Probable exo-1,4-beta-xylosidase xlnD (792 aa).

The N-terminal stretch at Met1 to Ala20 is a signal peptide. N-linked (GlcNAc...) asparagine glycosylation is found at Asn23, Asn87, Asn118, Asn142, and Asn246. Asp310 is an active-site residue. Asn326, Asn385, Asn404, Asn440, Asn477, Asn518, Asn679, and Asn701 each carry an N-linked (GlcNAc...) asparagine glycan.

Belongs to the glycosyl hydrolase 3 family.

The protein resides in the secreted. The catalysed reaction is Hydrolysis of (1-&gt;4)-beta-D-xylans, to remove successive D-xylose residues from the non-reducing termini.. The protein operates within glycan degradation; xylan degradation. Xylan 1,4-beta-xylosidase involved in the hydrolysis of xylan, a major structural heterogeneous polysaccharide found in plant biomass representing the second most abundant polysaccharide in the biosphere, after cellulose. The protein is Probable exo-1,4-beta-xylosidase xlnD (xlnD) of Aspergillus fumigatus (strain ATCC MYA-4609 / CBS 101355 / FGSC A1100 / Af293) (Neosartorya fumigata).